The primary structure comprises 238 residues: 3-dehydroquinate dehydratase (238 aa).

3-dehydroquinate-binding positions include 35-37 (ELR) and R68. The active-site Proton donor/acceptor is H131. The Schiff-base intermediate with substrate role is filled by K158. 3-dehydroquinate contacts are provided by R200 and Q223.

This sequence belongs to the type-I 3-dehydroquinase family. In terms of assembly, homodimer.

It carries out the reaction 3-dehydroquinate = 3-dehydroshikimate + H2O. It participates in metabolic intermediate biosynthesis; chorismate biosynthesis; chorismate from D-erythrose 4-phosphate and phosphoenolpyruvate: step 3/7. Functionally, involved in the third step of the chorismate pathway, which leads to the biosynthesis of aromatic amino acids. Catalyzes the cis-dehydration of 3-dehydroquinate (DHQ) and introduces the first double bond of the aromatic ring to yield 3-dehydroshikimate. This is 3-dehydroquinate dehydratase from Staphylococcus epidermidis (strain ATCC 35984 / DSM 28319 / BCRC 17069 / CCUG 31568 / BM 3577 / RP62A).